Reading from the N-terminus, the 110-residue chain is U1-lycotoxin-Ls1aa (110 aa).

The N-terminal stretch at 1–20 is a signal peptide; that stretch reads MKFVLLFGVLLVTLFSYSSA. Positions 21–44 are excised as a propeptide; the sequence is EMLDDFDQADEDELLSLIEKEEAR. 4 disulfides stabilise this stretch: C47–C62, C54–C71, C61–C89, and C73–C87.

Belongs to the neurotoxin 19 (CSTX) family. 03 subfamily. As to expression, expressed by the venom gland.

The protein localises to the secreted. The sequence is that of U1-lycotoxin-Ls1aa from Lycosa singoriensis (Wolf spider).